A 190-amino-acid polypeptide reads, in one-letter code: Biphenyl-2,3-diol 1,2-dioxygenase 3 (190 aa).

The region spanning 6–125 (RLAHFVLQTN…DGNMVELQID (120 aa)) is the VOC domain. Fe cation contacts are provided by His9, His73, and Glu121.

This sequence belongs to the extradiol ring-cleavage dioxygenase family. In terms of assembly, homohexamer. Requires Fe(2+) as cofactor.

The catalysed reaction is biphenyl-2,3-diol + O2 = 2-hydroxy-6-oxo-6-phenylhexa-2,4-dienoate + H(+). It functions in the pathway xenobiotic degradation; biphenyl degradation; 2-hydroxy-2,4-pentadienoate and benzoate from biphenyl: step 3/4. This is Biphenyl-2,3-diol 1,2-dioxygenase 3 (bphC3) from Rhodococcus globerulus.